Reading from the N-terminus, the 103-residue chain is Ig lambda chain C region (103 aa).

In terms of domain architecture, Ig-like spans 6 to 99 (PTITLFPPSK…NGTSITKTLK (94 aa)). Cysteines 28 and 85 form a disulfide.

This chain is Ig lambda chain C region, found in Gallus gallus (Chicken).